Here is a 166-residue protein sequence, read N- to C-terminus: UPF0561 protein C2orf68 (166 aa).

Residues 32–107 form a disordered region; the sequence is NQIARDDYDK…SELEPSGHQL (76 aa). 2 stretches are compositionally biased toward basic and acidic residues: residues 34-49 and 73-85; these read IARD…AAKE and RHRD…RNPD. A compositionally biased stretch (low complexity) spans 91–104; the sequence is ESSSSGGSELEPSG.

This sequence belongs to the UPF0561 family.

This Homo sapiens (Human) protein is UPF0561 protein C2orf68 (C2orf68).